A 182-amino-acid chain; its full sequence is uncharacterized protein (182 aa).

A helical membrane pass occupies residues 17 to 34 (LSLVLFAVLSVLPLGGCA). TPR repeat units lie at residues 89 to 122 (VDAA…TPDN) and 123 to 156 (LRAL…NPEN).

The protein localises to the membrane. This is an uncharacterized protein from Sinorhizobium fredii (strain NBRC 101917 / NGR234).